The primary structure comprises 781 residues: Mitochondrial inner membrane m-AAA protease component paraplegin (781 aa).

A mitochondrion-targeting transit peptide spans 1–43; it reads MAAALLLLRGLRPGPEPRPRRLWGLLSGRGPGLSSGAGARRPY. 2 disordered regions span residues 22–56 and 103–135; these read LWGLLSGRGPGLSSGAGARRPYAARGTPVGPAAAG and TSRMKQKNKDNDKPKGKTPEDDEEEKRRKERED. The segment covering 36 to 56 has biased composition (low complexity); it reads GAGARRPYAARGTPVGPAAAG. The propeptide at 44–105 is removed in mature form; it reads AARGTPVGPA…GSTLYFNTSR (62 aa). Residues 106–144 are Mitochondrial matrix-facing; that stretch reads MKQKNKDNDKPKGKTPEDDEEEKRRKEREDQMYRERLRT. The span at 109–135 shows a compositional bias: basic and acidic residues; that stretch reads KNKDNDKPKGKTPEDDEEEKRRKERED. The helical transmembrane segment at 145–165 threads the bilayer; sequence LFIIALVMSLLNSLSTSGGSI. The Mitochondrial intermembrane segment spans residues 166–248; the sequence is SWADFVNEML…DRIPVSYKRT (83 aa). A helical membrane pass occupies residues 249–269; sequence GFFGNALYALGMTAVGLAILW. Residues 270–781 lie on the Mitochondrial matrix side of the membrane; the sequence is YVFRLAGMTG…ASGEEEAPAP (512 aa). Ala-312, Gly-352, Cys-353, Gly-354, Lys-355, Thr-356, and Leu-357 together coordinate ATP. A 3'-nitrotyrosine modification is found at Tyr-505. Residue His-574 participates in Zn(2+) binding. Glu-575 is a catalytic residue. Zn(2+)-binding residues include His-578 and Asp-650. The interval 701-781 is interaction with PPIF; it reads HEAKLLVAKA…ASGEEEAPAP (81 aa).

The protein in the N-terminal section; belongs to the AAA ATPase family. It in the C-terminal section; belongs to the peptidase M41 family. In terms of assembly, forms heterohexamers with SPG7 and AFG3L1. The m-AAA protease is either composed of homohexamers of AFG3L2 or heterohexamers of AFG3L1, AFG3L2 and/or SPG7. Component of the mitochondrial permeability transition pore complex (mPTPC), at least composed of SPG7, VDAC1 and PPIF. Interacts with MAIP1. Zn(2+) is required as a cofactor. In terms of processing, upon import into the mitochondrion, the N-terminal transit peptide is cleaved by the mitochondrial-processing peptidase (MPP) to generate an intermediate form which undergoes a second proteolytic cleavage mediated by proteases AFG3L1 and/or AFG3L2 removing an additional N-terminal fragment to generate the proteolytically active mature form. Expressed in the brain and retina (at protein level).

It is found in the mitochondrion inner membrane. The catalysed reaction is ATP + H2O = ADP + phosphate + H(+). Its function is as follows. Catalytic component of the m-AAA protease, a protease that plays a key role in proteostasis of inner mitochondrial membrane proteins, and which is essential for axonal and neuron development. SPG7 possesses both ATPase and protease activities: the ATPase activity is required to unfold substrates, threading them into the internal proteolytic cavity for hydrolysis into small peptide fragments. The m-AAA protease exerts a dual role in the mitochondrial inner membrane: it mediates the processing of specific regulatory proteins and ensures protein quality control by degrading misfolded polypeptides. Mediates protein maturation of the mitochondrial ribosomal subunit MRPL32/bL32m by catalyzing the cleavage of the presequence of MRPL32/bL32m prior to assembly into the mitochondrial ribosome. Acts as a regulator of calcium in neurons by mediating degradation of SMDT1/EMRE before its assembly with the uniporter complex, limiting the availability of SMDT1/EMRE for MCU assembly and promoting efficient assembly of gatekeeper subunits with MCU. Also regulates mitochondrial calcium by catalyzing degradation of MCU. Plays a role in the formation and regulation of the mitochondrial permeability transition pore (mPTP) and its proteolytic activity is dispensable for this function. This chain is Mitochondrial inner membrane m-AAA protease component paraplegin, found in Mus musculus (Mouse).